The following is a 573-amino-acid chain: Phosphoenolpyruvate-protein phosphotransferase (573 aa).

The active-site Tele-phosphohistidine intermediate is the His-190. Substrate-binding residues include Arg-297 and Arg-333. The Mg(2+) site is built by Glu-432 and Asp-456. 455 to 456 (ND) serves as a coordination point for phosphoenolpyruvate. A substrate-binding site is contributed by Arg-466. Cys-503 serves as the catalytic Proton donor.

The protein belongs to the PEP-utilizing enzyme family. Homodimer. Mg(2+) is required as a cofactor.

The protein localises to the cytoplasm. The enzyme catalyses L-histidyl-[protein] + phosphoenolpyruvate = N(pros)-phospho-L-histidyl-[protein] + pyruvate. Its function is as follows. General (non sugar-specific) component of the phosphoenolpyruvate-dependent sugar phosphotransferase system (sugar PTS). This major carbohydrate active-transport system catalyzes the phosphorylation of incoming sugar substrates concomitantly with their translocation across the cell membrane. Enzyme I transfers the phosphoryl group from phosphoenolpyruvate (PEP) to the phosphoryl carrier protein (HPr). This chain is Phosphoenolpyruvate-protein phosphotransferase (ptsI), found in Staphylococcus carnosus (strain TM300).